The sequence spans 456 residues: Phosphomannomutase (456 aa).

Ser-98 acts as the Phosphoserine intermediate in catalysis. Mg(2+) contacts are provided by Ser-98, Asp-245, Asp-247, and Asp-249.

It belongs to the phosphohexose mutase family. It depends on Mg(2+) as a cofactor.

It carries out the reaction alpha-D-mannose 1-phosphate = D-mannose 6-phosphate. Its pathway is nucleotide-sugar biosynthesis; GDP-alpha-D-mannose biosynthesis; alpha-D-mannose 1-phosphate from D-fructose 6-phosphate: step 2/2. In terms of biological role, involved in the biosynthesis of the capsular polysaccharide colanic acid. The protein is Phosphomannomutase (manB) of Salmonella typhimurium (strain LT2 / SGSC1412 / ATCC 700720).